A 100-amino-acid polypeptide reads, in one-letter code: Conantokin-G (100 aa).

A signal peptide spans 1 to 21 (MHLYTYLYLLVPLVTFHLILG). The propeptide occupies 22–80 (TGTLDDGGALTERRSADATALKAEPVLLQKSAARSTDDNGKDRLTQMKRILKQRGNKAR). Residues 52-100 (SAARSTDDNGKDRLTQMKRILKQRGNKARGEEELQENQELIREKSNGKR) are disordered. Residues 56 to 66 (STDDNGKDRLT) show a composition bias toward basic and acidic residues. The interval 61 to 80 (GKDRLTQMKRILKQRGNKAR) is gamma-carboxylation recognition sequence that plays a role in the conversion of Glu to carboxy-Glu (Gla). Residue glutamate 83 coordinates a divalent metal cation. 4-carboxyglutamate occurs at positions 83, 84, 87, 90, and 94. Glutamate 87, glutamate 90, and glutamate 94 together coordinate a divalent metal cation. Positions 90–100 (ELIREKSNGKR) are enriched in basic and acidic residues. Asparagine 97 bears the Asparagine amide mark.

Belongs to the conotoxin B superfamily. Requires Ca(2+) as cofactor. Mg(2+) is required as a cofactor. In terms of tissue distribution, expressed by the venom duct.

It localises to the secreted. Conantokins inhibit N-methyl-D-aspartate (NMDA) receptors. This toxin is selective for the NR2B/GRIN2B subunit. Induces sleep-like symptoms in young mice and hyperactivity in older mice. The sequence is that of Conantokin-G from Conus geographus (Geography cone).